A 338-amino-acid chain; its full sequence is Aspartate carbamoyltransferase catalytic subunit (338 aa).

The carbamoyl phosphate site is built by Arg59 and Thr60. Lys87 contributes to the L-aspartate binding site. Residues Arg109, His142, and Gln145 each coordinate carbamoyl phosphate. L-aspartate-binding residues include Arg182 and Arg253. Residues Gly294 and Pro295 each coordinate carbamoyl phosphate.

Belongs to the aspartate/ornithine carbamoyltransferase superfamily. ATCase family. In terms of assembly, heterododecamer (2C3:3R2) of six catalytic PyrB chains organized as two trimers (C3), and six regulatory PyrI chains organized as three dimers (R2).

The enzyme catalyses carbamoyl phosphate + L-aspartate = N-carbamoyl-L-aspartate + phosphate + H(+). The protein operates within pyrimidine metabolism; UMP biosynthesis via de novo pathway; (S)-dihydroorotate from bicarbonate: step 2/3. Catalyzes the condensation of carbamoyl phosphate and aspartate to form carbamoyl aspartate and inorganic phosphate, the committed step in the de novo pyrimidine nucleotide biosynthesis pathway. The sequence is that of Aspartate carbamoyltransferase catalytic subunit from Prochlorococcus marinus (strain MIT 9515).